Consider the following 324-residue polypeptide: tRNA dimethylallyltransferase (324 aa).

20–27 (GPTASGKS) is an ATP binding site. 22 to 27 (TASGKS) contacts substrate. Interaction with substrate tRNA regions lie at residues 45 to 48 (DSAL), 168 to 172 (QRLIR), and 284 to 291 (KRQITWLR).

Belongs to the IPP transferase family. Monomer. Mg(2+) is required as a cofactor.

The catalysed reaction is adenosine(37) in tRNA + dimethylallyl diphosphate = N(6)-dimethylallyladenosine(37) in tRNA + diphosphate. Catalyzes the transfer of a dimethylallyl group onto the adenine at position 37 in tRNAs that read codons beginning with uridine, leading to the formation of N6-(dimethylallyl)adenosine (i(6)A). The protein is tRNA dimethylallyltransferase of Hydrogenovibrio crunogenus (strain DSM 25203 / XCL-2) (Thiomicrospira crunogena).